The following is a 572-amino-acid chain: Proline--tRNA ligase (572 aa).

This sequence belongs to the class-II aminoacyl-tRNA synthetase family. ProS type 1 subfamily. In terms of assembly, homodimer.

It localises to the cytoplasm. The catalysed reaction is tRNA(Pro) + L-proline + ATP = L-prolyl-tRNA(Pro) + AMP + diphosphate. In terms of biological role, catalyzes the attachment of proline to tRNA(Pro) in a two-step reaction: proline is first activated by ATP to form Pro-AMP and then transferred to the acceptor end of tRNA(Pro). As ProRS can inadvertently accommodate and process non-cognate amino acids such as alanine and cysteine, to avoid such errors it has two additional distinct editing activities against alanine. One activity is designated as 'pretransfer' editing and involves the tRNA(Pro)-independent hydrolysis of activated Ala-AMP. The other activity is designated 'posttransfer' editing and involves deacylation of mischarged Ala-tRNA(Pro). The misacylated Cys-tRNA(Pro) is not edited by ProRS. The protein is Proline--tRNA ligase of Escherichia coli O9:H4 (strain HS).